Reading from the N-terminus, the 74-residue chain is SLQGGAPNFPQPSQQNGGWQVSPDLGRDDKGNTRGQIEIQNKGKDHDFNAGWGKVIRGPNKAKPTWHVGGTYRR.

Positions 1 to 74 (SLQGGAPNFP…TWHVGGTYRR (74 aa)) are disordered.

The protein belongs to the coleoptericin family.

It localises to the secreted. Functionally, responsible for the anti Gram-negative activity of immune hemolymph of Z.atratus. The polypeptide is Coleoptericin (Zophobas atratus (Giant mealworm beetle)).